The following is a 191-amino-acid chain: Nascent polypeptide-associated complex subunit alpha (191 aa).

One can recognise an NAC-A/B domain in the interval 24–89 (SRPERKARKA…AKVEDPNSAA (66 aa)). The interval 126 to 149 (QDAPSADSSAPAPSGEATDASASG) is disordered. A compositionally biased stretch (low complexity) spans 127 to 139 (DAPSADSSAPAPS). One can recognise a UBA domain in the interval 153 to 191 (VSDEEIQLIVAQTGVDEAKAREAYISEKGDLINAIMKLQ).

It belongs to the NAC-alpha family. In terms of assembly, part of the nascent polypeptide-associated complex (NAC), consisting of EGD2 and EGD1. NAC associates with ribosomes via EGD1.

Its subcellular location is the cytoplasm. The protein resides in the nucleus. In terms of biological role, component of the nascent polypeptide-associated complex (NAC), a dynamic component of the ribosomal exit tunnel, protecting the emerging polypeptides from interaction with other cytoplasmic proteins to ensure appropriate nascent protein targeting. The NAC complex also promotes mitochondrial protein import by enhancing productive ribosome interactions with the outer mitochondrial membrane and blocks the inappropriate interaction of ribosomes translating non-secretory nascent polypeptides with translocation sites in the membrane of the endoplasmic reticulum. EGD2 may also be involved in transcription regulation. The polypeptide is Nascent polypeptide-associated complex subunit alpha (EGD2) (Cryptococcus neoformans var. neoformans serotype D (strain B-3501A) (Filobasidiella neoformans)).